A 352-amino-acid chain; its full sequence is Sortase SrtE1 (352 aa).

Composition is skewed to basic and acidic residues over residues 1–10 (MTALRPERDS) and 34–45 (RYEESAAGEENR). Positions 1 to 132 (MTALRPERDS…RQARARKPGA (132 aa)) are disordered. Over 1-139 (MTALRPERDS…PGAAVVASRA (139 aa)) the chain is Cytoplasmic. The interval 15–79 (DQGSSYGQPY…TGPIGGGPDG (65 aa)) is required for protein stability. Over residues 71–82 (GPIGGGPDGGGR) the composition is skewed to gly residues. Over residues 83-97 (AARRKAAKRRHGRRG) the composition is skewed to basic residues. Residues 140 to 160 (IGEIFITTGVLMLLFVTYQLW) traverse the membrane as a helical segment. The Extracellular segment spans residues 161 to 352 (WTNVRAHAQA…SKGKPDALVS (192 aa)). Active-site residues include His-251 and Cys-320. Arg-329 functions as the Proton donor in the catalytic mechanism.

The protein belongs to the bacterial sortase family. Class E subfamily.

The protein localises to the cell membrane. It carries out the reaction The enzyme catalyzes a cell wall sorting reaction in which a surface protein with a sorting signal containing a LPXTG motif is cleaved between the Thr and Gly residue. The resulting threonine carboxyl end of the protein is covalently attached to a pentaglycine cross-bridge of peptidoglycan.. Functionally, transpeptidase that anchors surface proteins to the cell wall. Recognizes both Leu-Ala-x-Thr-Gly and Leu-Pro-x-Thr-Gly, with a preference for the former. Unlike the S.aureus sortase it cleaves not only the Thr-Gly motif but also the Ala-X bond; Ala-Glu and Ala-His bonds are better substrates than the Thr-Gly motif in vitro. Among its possible substrates are the chaplins ChpA, ChpB and ChpC; this enzyme is less important for ChpC attachment than is SrtE2. A double knockout mutant of srtE1 and srtE2 shows a developmental defect in aerial hyphae formation more dramatic than that due to chaplin deletion. The chain is Sortase SrtE1 from Streptomyces coelicolor (strain ATCC BAA-471 / A3(2) / M145).